A 51-amino-acid chain; its full sequence is Ovomucoid (51 aa).

The Kazal-like domain occupies Val1–Gly49. 3 disulfides stabilise this stretch: Cys3-Cys33, Cys11-Cys30, and Cys19-Cys51. Asn40 is a glycosylation site (N-linked (GlcNAc...) asparagine).

The protein resides in the secreted. The sequence is that of Ovomucoid from Polyplectron napoleonis (Palawan peacock-pheasant).